The following is a 332-amino-acid chain: Ribosomal RNA small subunit methyltransferase C (332 aa).

This sequence belongs to the methyltransferase superfamily. RsmC family. Monomer.

Its subcellular location is the cytoplasm. The catalysed reaction is guanosine(1207) in 16S rRNA + S-adenosyl-L-methionine = N(2)-methylguanosine(1207) in 16S rRNA + S-adenosyl-L-homocysteine + H(+). Functionally, specifically methylates the guanine in position 1207 of 16S rRNA in the 30S particle. This Pseudomonas aeruginosa (strain UCBPP-PA14) protein is Ribosomal RNA small subunit methyltransferase C.